The primary structure comprises 195 residues: Cytochrome c biogenesis ATP-binding export protein CcmA (195 aa).

The 195-residue stretch at 1–195 (MLSLHQLQFN…IKSAQILQLV (195 aa)) folds into the ABC transporter domain. 33-40 (GANGSGKS) contributes to the ATP binding site.

This sequence belongs to the ABC transporter superfamily. CcmA exporter (TC 3.A.1.107) family. The complex is composed of two ATP-binding proteins (CcmA) and two transmembrane proteins (CcmB).

It localises to the cell inner membrane. The enzyme catalyses heme b(in) + ATP + H2O = heme b(out) + ADP + phosphate + H(+). In terms of biological role, part of the ABC transporter complex CcmAB involved in the biogenesis of c-type cytochromes; once thought to export heme, this seems not to be the case, but its exact role is uncertain. Responsible for energy coupling to the transport system. The polypeptide is Cytochrome c biogenesis ATP-binding export protein CcmA (Rickettsia felis (strain ATCC VR-1525 / URRWXCal2) (Rickettsia azadi)).